The primary structure comprises 824 residues: MASYPGPGKSKAKYPFKKRAGLQASAAAPEARSGLGASPLQSARSLPGNAPCLKHFPLDLRTSMDGKCKEIAEELFSRSLAESELRSAPYEFPEESPIEQLEERRQRLERQISQDVKLEPDILLRAKQDFLKTDSDSDLQLYKEQGEGQGDRGLWERDVVLEREFQRVIISGEEKCGVPFTDLLDAAKSVVRALFIREKYMALSLQSFCPTTRRYLQQLAEKPLETRTYEQSPDTPVSADAPVHPPALEQHPYEHCEPSAMPGDLGLGLRMVRGVVHVYTRRDPDEHCPEVELPYPDLQEFVADVNVLMALIINGPIKSFCYRRLQYLSSKFQMHVLLNEMKELAAQKKVPHRDFYNIRKVDTHIHASSCMNQKHLLRFIKRAMKRHLEEIVHVEQGREQTLREVFESMNLTAYDLSVDTLDVHADRNTFHRFDKFNAKYNPIGESVLREIFIKTDNKISGKYFAHIIKEVMADLEESKYQNAELRLSIYGRSRDEWDKLARWAVNHKVHSPNVRWLVQVPRLFDVYRTKGQLANFQEMLENIFLPLFEATVHPASHPELHLFLEHVDGFDSVDDESKPENHVFNLESPLPEAWVEEDNPPYAYYLYYTFANMAMLNHLRRQRGFHTFVLRPHCGEAGPIHHLVSAFMLAENISHGLLLRKAPVLQYLYYLAQIGIAMSPLSNNSLFLSYHRNPLPEYLSRGLMVSLSTDDPLQFHFTKEPLMEEYSIATQVWKLSSCDMCELARNSVLMSGFSHKVKSHWLGPNYTKEGPEGNDIRRTNVPDIRVGYRYETLCQELALITQAVQSEMLETIPEEVGIVMSPGP.

Positions methionine 1–alanine 43 are disordered. Residues serine 10–alanine 20 are compositionally biased toward basic residues. Omega-N-methylarginine is present on arginine 44. Phosphoserine is present on residues serine 45, serine 63, and serine 79. Phosphotyrosine is present on tyrosine 90. Phosphoserine is present on residues serine 96 and serine 113. Threonine 133 bears the Phosphothreonine mark. 2 positions are modified to phosphoserine: serine 135 and serine 137. Zn(2+)-binding residues include histidine 364 and histidine 366. Substrate-binding positions include histidine 366 and lysine 435–tyrosine 440. Histidine 633 serves as a coordination point for Zn(2+). Glutamate 636 provides a ligand contact to substrate. The Proton acceptor role is filled by histidine 655. Aspartate 710 is a Zn(2+) binding site. Aspartate 711–glutamine 714 serves as a coordination point for substrate.

The protein belongs to the metallo-dependent hydrolases superfamily. Adenosine and AMP deaminases family. Homotetramer. Requires Zn(2+) as cofactor.

It carries out the reaction AMP + H2O + H(+) = IMP + NH4(+). The protein operates within purine metabolism; IMP biosynthesis via salvage pathway; IMP from AMP: step 1/1. Its function is as follows. AMP deaminase plays a critical role in energy metabolism. Catalyzes the deamination of AMP to IMP and plays an important role in the purine nucleotide cycle. The sequence is that of AMP deaminase 2 from Mus musculus (Mouse).